Here is a 177-residue protein sequence, read N- to C-terminus: Nucleoside triphosphate/diphosphate phosphatase (177 aa).

Arginine 23 serves as the catalytic Proton donor. Residues asparagine 87, aspartate 103, aspartate 105, aspartate 107, aspartate 120, and glutamate 123 each coordinate Mg(2+).

It belongs to the Ntdp family. It depends on Mg(2+) as a cofactor.

The enzyme catalyses a ribonucleoside 5'-triphosphate + H2O = a ribonucleoside 5'-diphosphate + phosphate + H(+). It carries out the reaction a ribonucleoside 5'-diphosphate + H2O = a ribonucleoside 5'-phosphate + phosphate + H(+). Has nucleoside phosphatase activity towards nucleoside triphosphates and nucleoside diphosphates. In Streptococcus pneumoniae serotype 2 (strain D39 / NCTC 7466), this protein is Nucleoside triphosphate/diphosphate phosphatase.